The following is a 201-amino-acid chain: Protein OPI10 homolog (201 aa).

The protein belongs to the OPI10 family.

The polypeptide is Protein OPI10 homolog (Anopheles gambiae (African malaria mosquito)).